A 201-amino-acid chain; its full sequence is MICOS complex subunit MIC27 (201 aa).

The N-terminal 31 residues, 1–31 (MTQDKPIVETISNAGEQVTNVFGQFWQLVTS), are a transit peptide targeting the mitochondrion. The Cytoplasmic segment spans residues 32 to 117 (KNTTNNGDSK…KCNAYLTEEW (86 aa)). A helical membrane pass occupies residues 118–138 (TALPKAAAITVGGMAGFVLGL). Residues 139-145 (KRGPVGR) are Mitochondrial intermembrane-facing. Residues 146–166 (LLTTTIGLATMAAFCYPIEAV) form a helical membrane-spanning segment. At 167–201 (DVAKTGRAHAEQTWYSFQESPTPSAIVKTNLSPPK) the chain is on the cytoplasmic side.

The protein belongs to the apolipoprotein O/MICOS complex subunit Mic27 family. As to quaternary structure, component of the mitochondrial contact site and cristae organizing system (MICOS) complex.

It localises to the mitochondrion outer membrane. In terms of biological role, sustains mitochondrial morphology probably through maintaining cristae morphology. May act as a component of the MICOS complex, a large protein complex of the mitochondria. The sequence is that of MICOS complex subunit MIC27 from Caenorhabditis elegans.